The sequence spans 296 residues: Small ribosomal subunit protein uS2 (296 aa).

Disordered stretches follow at residues 1 to 24 and 270 to 296; these read MNTKKEEVVSSPEATVEKKQTQSQ and HELKKSEEASEVKAASTKEKLTEEASQ.

The protein belongs to the universal ribosomal protein uS2 family.

This chain is Small ribosomal subunit protein uS2, found in Mycoplasmopsis synoviae (strain 53) (Mycoplasma synoviae).